Here is a 565-residue protein sequence, read N- to C-terminus: Putative serine protease pcp-1 (565 aa).

The signal sequence occupies residues 1–17 (MRWFLVLLLVALVSVEA). N-linked (GlcNAc...) asparagine glycosylation is found at Asn-69, Asn-107, and Asn-126. Ser-177 serves as the catalytic Charge relay system. Residues Asn-240, Asn-244, Asn-257, Asn-271, Asn-319, and Asn-347 are each glycosylated (N-linked (GlcNAc...) asparagine). Active-site charge relay system residues include Asp-451 and His-479.

It belongs to the peptidase S28 family.

The chain is Putative serine protease pcp-1 (pcp-1) from Caenorhabditis elegans.